The primary structure comprises 589 residues: Probable ATP-dependent RNA helicase DDX59 (589 aa).

Disordered stretches follow at residues 1-36 (MFVP…QLEG) and 48-98 (KEAV…SKTQ). The segment covering 12–27 (NSNDDLKSCEAKKSKP) has biased composition (basic and acidic residues). Residue lysine 26 forms a Glycyl lysine isopeptide (Lys-Gly) (interchain with G-Cter in SUMO2) linkage. Position 64 is a phosphoserine (serine 64). The segment covering 80–91 (GVKDSHPSEEPV) has biased composition (basic and acidic residues). An HIT-type zinc finger spans residues 104 to 133 (GEPVCVVCGRYGEYICDKTDEDVCSLECKA). Residues serine 156 and serine 160 each carry the phosphoserine modification. The Q motif signature appears at 203–231 (IDFEHCGFPETLNQNLKKSGYEVPTPIQM). The Helicase ATP-binding domain occupies 234-375 (IPVGLLGRDI…DQLLHNPVRI (142 aa)). 247 to 254 (ADTGSGKT) provides a ligand contact to ATP. The DEAD box signature appears at 323–326 (VKAD). The Helicase C-terminal domain occupies 399 to 549 (KKKKLFEILN…ILPPQLLNSP (151 aa)).

Belongs to the DEAD box helicase family. DDX59 subfamily. As to quaternary structure, interacts (via HIT-type zinc finger) with the RUVBL1/RUVBL2 complex in the presence of ADP.

It localises to the cytoplasm. The protein resides in the nucleus. The catalysed reaction is ATP + H2O = ADP + phosphate + H(+). This is Probable ATP-dependent RNA helicase DDX59 (Ddx59) from Rattus norvegicus (Rat).